The sequence spans 142 residues: Snaclec 2 (142 aa).

The signal sequence occupies residues 1–23 (MGRFIFVSFSLLVVFLSLSGTGA). A disulfide bond links C25 and C36. Residues 32–139 (YEGHCYRVFQ…CSETHNVICK (108 aa)) enclose the C-type lectin domain. N-linked (GlcNAc...) asparagine glycosylation occurs at N43. Cystine bridges form between C53–C138 and C115–C130.

This sequence belongs to the snaclec family. Heterodimer; disulfide-linked. As to expression, expressed by the venom gland.

It localises to the secreted. Functionally, interferes with one step of hemostasis (modulation of platelet aggregation, or coagulation cascade, for example). This chain is Snaclec 2, found in Sistrurus catenatus edwardsii (Desert massasauga).